The primary structure comprises 155 residues: Large ribosomal subunit protein uL16m (155 aa).

This sequence belongs to the universal ribosomal protein uL16 family.

The protein localises to the mitochondrion. This chain is Large ribosomal subunit protein uL16m (RPL16), found in Petunia hybrida (Petunia).